A 609-amino-acid chain; its full sequence is Membrane protein insertase YidC (609 aa).

A helical membrane pass occupies residues 9 to 29 (IIAIVLSGLILIAWQYFYNIP). The disordered stretch occupies residues 35 to 63 (RAAQQAQSQTAKSPTEPTPNSPKPDHPAA). 4 helical membrane-spanning segments follow: residues 375–395 (VFGN…AIFF), 449–469 (LPMV…FVTI), 507–527 (LLGP…TMWF), and 546–566 (WMPV…VIYW).

The protein belongs to the OXA1/ALB3/YidC family. Type 1 subfamily. In terms of assembly, interacts with the Sec translocase complex via SecD. Specifically interacts with transmembrane segments of nascent integral membrane proteins during membrane integration.

The protein localises to the cell inner membrane. Its function is as follows. Required for the insertion and/or proper folding and/or complex formation of integral membrane proteins into the membrane. Involved in integration of membrane proteins that insert both dependently and independently of the Sec translocase complex, as well as at least some lipoproteins. Aids folding of multispanning membrane proteins. The sequence is that of Membrane protein insertase YidC from Nitrobacter hamburgensis (strain DSM 10229 / NCIMB 13809 / X14).